Here is a 159-residue protein sequence, read N- to C-terminus: ATP synthase subunit b (159 aa).

A helical transmembrane segment spans residues 2–22; that stretch reads NISIPQIIAAILNFIILLLIV.

Belongs to the ATPase B chain family. F-type ATPases have 2 components, F(1) - the catalytic core - and F(0) - the membrane proton channel. F(1) has five subunits: alpha(3), beta(3), gamma(1), delta(1), epsilon(1). F(0) has three main subunits: a(1), b(2) and c(10-14). The alpha and beta chains form an alternating ring which encloses part of the gamma chain. F(1) is attached to F(0) by a central stalk formed by the gamma and epsilon chains, while a peripheral stalk is formed by the delta and b chains.

It is found in the cell membrane. Its function is as follows. F(1)F(0) ATP synthase produces ATP from ADP in the presence of a proton or sodium gradient. F-type ATPases consist of two structural domains, F(1) containing the extramembraneous catalytic core and F(0) containing the membrane proton channel, linked together by a central stalk and a peripheral stalk. During catalysis, ATP synthesis in the catalytic domain of F(1) is coupled via a rotary mechanism of the central stalk subunits to proton translocation. Functionally, component of the F(0) channel, it forms part of the peripheral stalk, linking F(1) to F(0). This Clostridium botulinum (strain Okra / Type B1) protein is ATP synthase subunit b.